A 254-amino-acid chain; its full sequence is L-erythrulose-1-phosphate isomerase (254 aa).

The active-site Electrophile is His-97. Glu-170 functions as the Proton acceptor in the catalytic mechanism. 2 residues coordinate substrate: Gly-176 and Ser-213.

Belongs to the triosephosphate isomerase family. As to quaternary structure, homodimer.

It is found in the cytoplasm. The catalysed reaction is L-erythrulose 1-phosphate = D-erythrulose 4-phosphate. The protein operates within carbohydrate metabolism; erythritol degradation. Catalyzes the isomerization of D-erythrulose-4P to L-erythrulose-1P. This is L-erythrulose-1-phosphate isomerase from Mesorhizobium japonicum (strain LMG 29417 / CECT 9101 / MAFF 303099) (Mesorhizobium loti (strain MAFF 303099)).